The following is a 250-amino-acid chain: Small ribosomal subunit protein uS5 (250 aa).

Positions 1–22 (MNVVETSSEMNSNVEKASTPKQ) are enriched in polar residues. Positions 1–40 (MNVVETSSEMNSNVEKASTPKQENNKRFERKSRPSSRQKV) are disordered. Residues 45–108 (FEEKVVTIRR…KEAKKNLVSV (64 aa)) form the S5 DRBM domain.

This sequence belongs to the universal ribosomal protein uS5 family. In terms of assembly, part of the 30S ribosomal subunit. Contacts proteins S4 and S8.

With S4 and S12 plays an important role in translational accuracy. Its function is as follows. Located at the back of the 30S subunit body where it stabilizes the conformation of the head with respect to the body. This chain is Small ribosomal subunit protein uS5, found in Mycoplasma capricolum subsp. capricolum (strain California kid / ATCC 27343 / NCTC 10154).